The sequence spans 232 residues: LexA repressor (232 aa).

A DNA-binding region (H-T-H motif) is located at residues 26 to 46; sequence FDEMKDALDLRSKSGIHRLIT. Residues S153 and K191 each act as for autocatalytic cleavage activity in the active site.

The protein belongs to the peptidase S24 family. Homodimer.

It catalyses the reaction Hydrolysis of Ala-|-Gly bond in repressor LexA.. Its function is as follows. Represses a number of genes involved in the response to DNA damage (SOS response), including recA and lexA. In the presence of single-stranded DNA, RecA interacts with LexA causing an autocatalytic cleavage which disrupts the DNA-binding part of LexA, leading to derepression of the SOS regulon and eventually DNA repair. This is LexA repressor from Bradyrhizobium sp. (strain ORS 278).